The chain runs to 299 residues: Cysteine synthase B (299 aa).

Residue lysine 45 is modified to N6-(pyridoxal phosphate)lysine. Residues asparagine 75, 178-182 (GTTGT), and serine 259 contribute to the pyridoxal 5'-phosphate site.

Belongs to the cysteine synthase/cystathionine beta-synthase family. Pyridoxal 5'-phosphate is required as a cofactor.

The catalysed reaction is O-acetyl-L-serine + hydrogen sulfide = L-cysteine + acetate. It functions in the pathway amino-acid biosynthesis; L-cysteine biosynthesis; L-cysteine from L-serine: step 2/2. The protein is Cysteine synthase B (cysM) of Pseudomonas aeruginosa (strain ATCC 15692 / DSM 22644 / CIP 104116 / JCM 14847 / LMG 12228 / 1C / PRS 101 / PAO1).